The primary structure comprises 185 residues: Ribosome-recycling factor (185 aa).

It belongs to the RRF family.

It is found in the cytoplasm. Its function is as follows. Responsible for the release of ribosomes from messenger RNA at the termination of protein biosynthesis. May increase the efficiency of translation by recycling ribosomes from one round of translation to another. This is Ribosome-recycling factor from Lactococcus lactis subsp. lactis (strain IL1403) (Streptococcus lactis).